The primary structure comprises 144 residues: Cytochrome c3 (144 aa).

Positions 1-24 (MRYLVISLFAVSLLMAGSALVGNA) are cleaved as a signal peptide. Histidine 51, histidine 54, cysteine 59, cysteine 62, histidine 63, histidine 64, cysteine 76, cysteine 81, histidine 82, histidine 100, cysteine 108, cysteine 111, histidine 112, cysteine 125, cysteine 128, and histidine 129 together coordinate heme c.

Belongs to the cytochrome c family. As to quaternary structure, homodimer. Heterotrimer of cytochrome c3 FDH2C and formate dehydrogenase FDH2 alpha and beta subunits that forms the FdhABC(3) complex. Post-translationally, binds 4 heme c groups per subunit.

It localises to the periplasm. Its function is as follows. Participates in sulfate respiration coupled with phosphorylation by transferring electrons from the enzyme dehydrogenase to ferredoxin. Gamma chain of the formate dehydrogenase (FDH) that catalyzes the reversible two-electron oxidation of formate to carbon dioxide. The gamma subunit of formate dehydrogenase forms a c-type heme. In Nitratidesulfovibrio vulgaris (strain ATCC 29579 / DSM 644 / CCUG 34227 / NCIMB 8303 / VKM B-1760 / Hildenborough) (Desulfovibrio vulgaris), this protein is Cytochrome c3.